Here is a 328-residue protein sequence, read N- to C-terminus: Phosphate acyltransferase (328 aa).

It belongs to the PlsX family. As to quaternary structure, homodimer. Probably interacts with PlsY.

It is found in the cytoplasm. It carries out the reaction a fatty acyl-[ACP] + phosphate = an acyl phosphate + holo-[ACP]. It participates in lipid metabolism; phospholipid metabolism. In terms of biological role, catalyzes the reversible formation of acyl-phosphate (acyl-PO(4)) from acyl-[acyl-carrier-protein] (acyl-ACP). This enzyme utilizes acyl-ACP as fatty acyl donor, but not acyl-CoA. This chain is Phosphate acyltransferase, found in Campylobacter jejuni subsp. jejuni serotype O:6 (strain 81116 / NCTC 11828).